Here is a 404-residue protein sequence, read N- to C-terminus: MLTTSLTLNKEKWKPIWNKALVFLFVATYFLDGITRYKHLIIILMVITAIYQVSRSPKSFPPLFKNSVFYSVAVLSLILVYSILISPDMKESFKEFENTVLEGFLLYTLLIPVLLKDETKETVAKIVLFSFLTSLGLRCLAESILYIEDYNKGIMPFISYAHRHMSDSMVFLFPALLNIWLFRKNAIKLVFLVLSAIYLFFILGTLSRGAWLAVLIVGVLWAILNRQWKLIGVGAILLAIIGALVITQHNNKPDPEHLLYKLQQTDSSYRYTNGTQGTAWILIQENPIKGYGYGNDVYDGVYNKRVVDYPTWTFKESIGPHNTILYIWFSAGILGLASLVYLYGAIIRETASSTLRKVEISPYNAHLLLFLSFVGFYIVRGNFEQVDIAQIGIITGFLLALRNR.

Transmembrane regions (helical) follow at residues 16–32, 39–55, 67–84, 96–115, 127–147, 168–183, 189–221, 228–246, 324–343, 363–379, and 385–401; these read IWNK…YFLD, HLII…QVSR, SVFY…YSIL, FENT…PVLL, VLFS…ILYI, SMVF…WLFR, LVFL…GVLW, WKLI…ALVI, ILYI…VYLY, YNAH…FYIV, and QVDI…LLAL.

Belongs to the O-antigen ligase family.

The protein localises to the cell inner membrane. It carries out the reaction a lipid-linked O antigen + a lipid A-core oligosaccharide = a lipopolysaccharide + a polyisoprenyl diphosphate.. The protein operates within bacterial outer membrane biogenesis; lipopolysaccharide biosynthesis. Its function is as follows. Transferase involved in the biosynthesis of the lipopolysaccharide (LPS). Catalyzes the transfer of a polymerized O-antigen molecule from its polyprenyl diphosphate membrane anchor to a terminal sugar of the lipid A-core oligosaccharide, finalizing the biosynthesis of the lipopolysaccharide. May also be involved in a feedback mechanism to regulate O-unit synthesis, based on the availability of O units on the periplasmic face of the membrane. The chain is O-antigen ligase from Salmonella typhimurium (strain LT2 / SGSC1412 / ATCC 700720).